The chain runs to 596 residues: Zinc finger CCCH domain-containing protein 64 (596 aa).

Disordered stretches follow at residues 243–263 (LSPT…PPKT) and 272–291 (DGAA…SQYW). C3H1-type zinc fingers lie at residues 303-331 (SQGE…HNAE) and 335-363 (QCRR…HEFQ).

This chain is Zinc finger CCCH domain-containing protein 64, found in Arabidopsis thaliana (Mouse-ear cress).